A 464-amino-acid polypeptide reads, in one-letter code: MNKKAMAAAVSMILAGGAHAAQQERPNVIVIIADDMGYSDISPFGGEIPTPNLQAMAEQGMRMSQYYTSPMSAPARSMLLTGNSNQQAGMGGMWWYDSTIGKEGYELRLTDRVTTMAERFKDAGYNTLMAGKWHLGFVPGATPKDRGFNHAFAFMGGGTSHFNDAIPLGTVEAFHTYYTRDGERVSLPDDFYSSEAYARQMNSWIKATPKEQPVFAWLAFTAPHDPLQAPDEWIKRFKGQYEQGYAEVYRQRIARLKALGIIHDDTPLPHLELDKEWEALTPEQQKYTAKVMQVYAAMIANMDAQIGTLMETLKQTGRDKNTLLVFLTDNGANPAQGFYYESTPEFWKQFDNSYDNVGRKGSFVSYGPHWANVSNAPYANYHKTTSAQGGINTDFMISGPGITRHGKIDASTMAVYDVAPTLYEFAGIDPNKSLAKKPVLPMIGVSLSAISPAKYRSRRAELRG.

The N-terminal stretch at 1–20 (MNKKAMAAAVSMILAGGAHA) is a signal peptide. Ca(2+)-binding residues include Asp34, Asp35, and Ser72. Catalysis depends on Ser72, which acts as the Nucleophile. 3-oxoalanine (Ser) is present on Ser72. The active site involves His134. 2 residues coordinate Ca(2+): Asp329 and Asn330.

The protein belongs to the sulfatase family. Ca(2+) is required as a cofactor. In terms of processing, the conversion to 3-oxoalanine (also known as C-formylglycine, FGly), of a serine or cysteine residue in prokaryotes and of a cysteine residue in eukaryotes, is critical for catalytic activity.

The protein localises to the periplasm. It catalyses the reaction an aryl sulfate + H2O = a phenol + sulfate + H(+). Functionally, plays an important role in the mineralization of sulfates. This is Arylsulfatase (atsA) from Klebsiella aerogenes (Enterobacter aerogenes).